A 126-amino-acid chain; its full sequence is Protein ApaG (126 aa).

The region spanning 2–126 (SQVESPIKIK…FRLAVPGIFQ (125 aa)) is the ApaG domain.

The sequence is that of Protein ApaG from Shewanella frigidimarina (strain NCIMB 400).